The sequence spans 548 residues: Sesquiterpene synthase 12 (548 aa).

Mg(2+)-binding residues include aspartate 299, aspartate 303, aspartate 444, and glutamate 452. The DDXXD motif motif lies at 299–303 (DDTFD).

Belongs to the terpene synthase family. Tpsa subfamily. The cofactor is Mg(2+). It depends on Mn(2+) as a cofactor. In terms of tissue distribution, mostly expressed in leaves, to a lower extent in stems, trichomes, flowers and roots and, at low levels, in fruits.

The catalysed reaction is (2E,6E)-farnesyl diphosphate = alpha-humulene + diphosphate. The enzyme catalyses (2E,6E)-farnesyl diphosphate = (-)-(E)-beta-caryophyllene + diphosphate. It carries out the reaction (2Z,6Z)-farnesyl diphosphate = beta-bisabolene + diphosphate. It catalyses the reaction (2E)-geranyl diphosphate = terpinolene + diphosphate. The catalysed reaction is (2E)-geranyl diphosphate = limonene + diphosphate. The enzyme catalyses (2E)-geranyl diphosphate = beta-myrcene + diphosphate. It carries out the reaction (2E)-geranyl diphosphate = (E)-beta-ocimene + diphosphate. It catalyses the reaction (2Z,6Z)-farnesyl diphosphate = gamma-curcumene + diphosphate. The catalysed reaction is (2Z,6Z)-farnesyl diphosphate = (Z)-gamma-bisabolene + diphosphate. It functions in the pathway secondary metabolite biosynthesis; terpenoid biosynthesis. Its function is as follows. Sesquiterpene synthase involved in the biosynthesis of volatile compounds. Mediates the conversion of (2E,6E)-farnesyl diphosphate (FPP) into (1E,4E,8E)-alpha-humulene and (-)-(E)-beta-caryophyllene, and of (2Z,6Z)-farnesyl diphosphate ((ZZ)-FPP) into beta-bisabolene, gamma-curcumene and (Z)-gamma-bisabolene. Can act with a low efficiency as a monoterpene synthase with geranyl diphosphate (GPP) as substrate, thus producing beta-myrcene, (E)-beta-ocimene, limonene and terpinolene. In Solanum lycopersicum (Tomato), this protein is Sesquiterpene synthase 12.